Here is a 614-residue protein sequence, read N- to C-terminus: Putative amino acid transporter AAT1 (614 aa).

The next 11 membrane-spanning stretches (helical) occupy residues 184 to 216 (VLFL…LILL), 222 to 243 (YITT…YGNL), 255 to 275 (LIDF…LILV), 295 to 311 (RIFI…PLTF), 318 to 340 (INCF…GYQS), 360 to 380 (HFFK…NACF), 401 to 417 (ILIQ…LGYL), 437 to 459 (SILL…NFIA), 531 to 547 (CAAI…EFNV), 553 to 575 (FIGI…LIYY), and 587 to 613 (RYAT…FIII).

This sequence belongs to the amino acid/polyamine transporter 2 family.

The protein localises to the vacuole membrane. Putative amino acid transporter. Involved in maintaining the osmotic homeostasis of the digestive vacuole. Important for the timely development and growth of the asexual-stage parasites and male gametocyte maturation. The protein is Putative amino acid transporter AAT1 of Plasmodium berghei (strain Anka).